The primary structure comprises 435 residues: 3-phosphoshikimate 1-carboxyvinyltransferase (435 aa).

3-phosphoshikimate-binding residues include lysine 23, serine 24, and arginine 28. Residue lysine 23 participates in phosphoenolpyruvate binding. Phosphoenolpyruvate-binding residues include glycine 97 and arginine 125. Residues serine 170, serine 171, glutamine 172, serine 198, aspartate 314, asparagine 338, and lysine 342 each coordinate 3-phosphoshikimate. Glutamine 172 provides a ligand contact to phosphoenolpyruvate. Aspartate 314 (proton acceptor) is an active-site residue. Positions 346, 388, and 413 each coordinate phosphoenolpyruvate.

The protein belongs to the EPSP synthase family. As to quaternary structure, monomer.

The protein resides in the cytoplasm. It catalyses the reaction 3-phosphoshikimate + phosphoenolpyruvate = 5-O-(1-carboxyvinyl)-3-phosphoshikimate + phosphate. It participates in metabolic intermediate biosynthesis; chorismate biosynthesis; chorismate from D-erythrose 4-phosphate and phosphoenolpyruvate: step 6/7. In terms of biological role, catalyzes the transfer of the enolpyruvyl moiety of phosphoenolpyruvate (PEP) to the 5-hydroxyl of shikimate-3-phosphate (S3P) to produce enolpyruvyl shikimate-3-phosphate and inorganic phosphate. This chain is 3-phosphoshikimate 1-carboxyvinyltransferase, found in Sodalis glossinidius (strain morsitans).